The following is a 446-amino-acid chain: N-succinylarginine dihydrolase (446 aa).

Substrate is bound by residues 19–28 (AGLSFGNVAS), Asn-110, and 137–138 (HR). Residue Glu-174 is part of the active site. Arg-213 lines the substrate pocket. Residue His-249 is part of the active site. Asp-251 and Asn-364 together coordinate substrate. Catalysis depends on Cys-370, which acts as the Nucleophile.

It belongs to the succinylarginine dihydrolase family. In terms of assembly, homodimer.

It carries out the reaction N(2)-succinyl-L-arginine + 2 H2O + 2 H(+) = N(2)-succinyl-L-ornithine + 2 NH4(+) + CO2. It participates in amino-acid degradation; L-arginine degradation via AST pathway; L-glutamate and succinate from L-arginine: step 2/5. Its function is as follows. Catalyzes the hydrolysis of N(2)-succinylarginine into N(2)-succinylornithine, ammonia and CO(2). The protein is N-succinylarginine dihydrolase of Burkholderia cenocepacia (strain ATCC BAA-245 / DSM 16553 / LMG 16656 / NCTC 13227 / J2315 / CF5610) (Burkholderia cepacia (strain J2315)).